The following is a 149-amino-acid chain: Nucleoside diphosphate kinase (149 aa).

Residues K9, F57, R85, T91, R102, and N112 each coordinate ATP. The Pros-phosphohistidine intermediate role is filled by H115.

The protein belongs to the NDK family. Homotetramer. Mg(2+) serves as cofactor.

The protein resides in the cytoplasm. It carries out the reaction a 2'-deoxyribonucleoside 5'-diphosphate + ATP = a 2'-deoxyribonucleoside 5'-triphosphate + ADP. The enzyme catalyses a ribonucleoside 5'-diphosphate + ATP = a ribonucleoside 5'-triphosphate + ADP. Major role in the synthesis of nucleoside triphosphates other than ATP. The ATP gamma phosphate is transferred to the NDP beta phosphate via a ping-pong mechanism, using a phosphorylated active-site intermediate. This Microcystis aeruginosa (strain NIES-843 / IAM M-2473) protein is Nucleoside diphosphate kinase.